An 86-amino-acid polypeptide reads, in one-letter code: Small ribosomal subunit protein uS17 (86 aa).

It belongs to the universal ribosomal protein uS17 family. As to quaternary structure, part of the 30S ribosomal subunit.

Functionally, one of the primary rRNA binding proteins, it binds specifically to the 5'-end of 16S ribosomal RNA. The protein is Small ribosomal subunit protein uS17 of Marinomonas sp. (strain MWYL1).